The primary structure comprises 126 residues: Glycine cleavage system H protein (126 aa).

In terms of domain architecture, Lipoyl-binding spans 22 to 104 (VAYVGITDYA…YGEGWLIKMK (83 aa)). K63 carries the N6-lipoyllysine modification.

It belongs to the GcvH family. As to quaternary structure, the glycine cleavage system is composed of four proteins: P, T, L and H. (R)-lipoate serves as cofactor.

In terms of biological role, the glycine cleavage system catalyzes the degradation of glycine. The H protein shuttles the methylamine group of glycine from the P protein to the T protein. The sequence is that of Glycine cleavage system H protein from Bacteroides fragilis (strain ATCC 25285 / DSM 2151 / CCUG 4856 / JCM 11019 / LMG 10263 / NCTC 9343 / Onslow / VPI 2553 / EN-2).